The chain runs to 156 residues: Small ribosomal subunit protein uS7 (156 aa).

It belongs to the universal ribosomal protein uS7 family. As to quaternary structure, part of the 30S ribosomal subunit. Contacts proteins S9 and S11.

One of the primary rRNA binding proteins, it binds directly to 16S rRNA where it nucleates assembly of the head domain of the 30S subunit. Is located at the subunit interface close to the decoding center, probably blocks exit of the E-site tRNA. This chain is Small ribosomal subunit protein uS7, found in Geobacter sp. (strain M21).